The chain runs to 341 residues: GTPase Obg (341 aa).

Positions 1 to 159 constitute an Obg domain; the sequence is MKFLDQAKVY…RAIWLRLKLI (159 aa). One can recognise an OBG-type G domain in the interval 160–327; the sequence is ADAGLVGLPN…VLRAGAHIIE (168 aa). GTP is bound by residues 166-173, 191-195, 212-215, 279-282, and 308-310; these read GLPNAGKS, FTTLH, DIPG, SQID, and SAV. Mg(2+) is bound by residues S173 and T193.

The protein belongs to the TRAFAC class OBG-HflX-like GTPase superfamily. OBG GTPase family. Monomer. Mg(2+) serves as cofactor.

Its subcellular location is the cytoplasm. An essential GTPase which binds GTP, GDP and possibly (p)ppGpp with moderate affinity, with high nucleotide exchange rates and a fairly low GTP hydrolysis rate. Plays a role in control of the cell cycle, stress response, ribosome biogenesis and in those bacteria that undergo differentiation, in morphogenesis control. The chain is GTPase Obg from Bartonella tribocorum (strain CIP 105476 / IBS 506).